Consider the following 504-residue polypeptide: Anaerobic nitric oxide reductase transcription regulator NorR (504 aa).

Asp-57 is subject to 4-aspartylphosphate. The 230-residue stretch at 187 to 416 folds into the Sigma-54 factor interaction domain; the sequence is MIGLSPGMTQ…LEHAIHRAVV (230 aa). ATP-binding positions include 215 to 222 and 278 to 287; these read GETGTGKE and ADNGTLFLDE. The H-T-H motif DNA-binding region spans 479–498; it reads WAACARMLETDVANLHRLAK.

It functions in the pathway nitrogen metabolism; nitric oxide reduction. Functionally, required for the expression of anaerobic nitric oxide (NO) reductase, acts as a transcriptional activator for at least the norVW operon. Activation also requires sigma-54. The polypeptide is Anaerobic nitric oxide reductase transcription regulator NorR (Escherichia coli (strain SE11)).